The chain runs to 129 residues: Small ribosomal subunit protein uS9 (129 aa).

Belongs to the universal ribosomal protein uS9 family.

The chain is Small ribosomal subunit protein uS9 from Chlorobium limicola (strain DSM 245 / NBRC 103803 / 6330).